Reading from the N-terminus, the 277-residue chain is Hematopoietically-expressed homeobox protein HHEX (277 aa).

2 disordered regions span residues 47–69 and 199–277; these read AAPA…NSSF and WRRL…SATR. Residues 52-63 show a composition bias toward pro residues; it reads HSLPAPPPPTLP. The segment at residues 144 to 203 is a DNA-binding region (homeobox); the sequence is RKGGQVRFSNEQTIELEKKFETQKYLSPPERKRLAKLLQLSERQVKTWFQNRRAKWRRLK. Positions 210–226 are enriched in basic and acidic residues; the sequence is TKKEEAEGTGDHGDPRS. A compositionally biased stretch (acidic residues) spans 250-266; that stretch reads EDPESDVSDDSDQEVDI.

In terms of tissue distribution, in all hematopoietic tissues except peripheral blood erythrocytes and in the liver and lung.

The protein resides in the nucleus. Its function is as follows. Recognizes the DNA sequence 5'-ATTAA-3'. Transcriptional repressor. May play a role in hematopoietic differentiation. This is Hematopoietically-expressed homeobox protein HHEX (HHEX) from Gallus gallus (Chicken).